The primary structure comprises 857 residues: Bifunctional levopimaradiene synthase, chloroplastic (857 aa).

Residues 1-33 (MALPSSSLSSQIHTGATTQCIPHFHGSLNAGTS) constitute a chloroplast transit peptide. Lys-257 contributes to the substrate binding site. 2 residues coordinate Mg(2+): Asp-390 and Asp-392. Positions 390–393 (DIDD) match the DXDD motif motif. Substrate is bound at residue Lys-477. Mg(2+) is bound by residues Asp-609, Asp-613, Asn-753, Thr-757, and Glu-761. The short motif at 609-613 (DDLYD) is the DDXXD motif element.

It belongs to the terpene synthase family. Tpsd subfamily. Mg(2+) serves as cofactor.

The protein resides in the plastid. The protein localises to the chloroplast. It catalyses the reaction (2E,6E,10E)-geranylgeranyl diphosphate = (+)-copalyl diphosphate. The enzyme catalyses (+)-copalyl diphosphate = abieta-7,13-diene + diphosphate. It carries out the reaction (+)-copalyl diphosphate = abieta-8(14),12-diene + diphosphate. The catalysed reaction is (+)-copalyl diphosphate = neoabietadiene + diphosphate. The protein operates within terpene metabolism; oleoresin biosynthesis. Functionally, involved in defensive oleoresin formation in conifers in response to insect attack or other injury. Involved in diterpene (C20) olefins biosynthesis. Bifunctional enzyme that catalyzes two sequential cyclizations of geranylgeranyl diphosphate (GGPP) to levopimaradiene. Levopimaradiene is the major products of the enzyme with abietadiene and neoabietadiene. No activity with farnesyl diphosphate (FPP) as substrate. The polypeptide is Bifunctional levopimaradiene synthase, chloroplastic (Pinus banksiana (Jack pine)).